Here is a 41-residue protein sequence, read N- to C-terminus: Large ribosomal subunit protein bL36 (41 aa).

Belongs to the bacterial ribosomal protein bL36 family.

The sequence is that of Large ribosomal subunit protein bL36 from Rhodopseudomonas palustris (strain TIE-1).